The following is a 273-amino-acid chain: Aliphatic sulfonates import ATP-binding protein SsuB 2 (273 aa).

The ABC transporter domain occupies 17–241 (LLDLRITRKL…PRDRRDPTLA (225 aa)). 50 to 57 (GPSGCGKS) contributes to the ATP binding site.

This sequence belongs to the ABC transporter superfamily. Aliphatic sulfonates importer (TC 3.A.1.17.2) family. In terms of assembly, the complex is composed of two ATP-binding proteins (SsuB), two transmembrane proteins (SsuC) and a solute-binding protein (SsuA).

Its subcellular location is the cell inner membrane. The enzyme catalyses ATP + H2O + aliphatic sulfonate-[sulfonate-binding protein]Side 1 = ADP + phosphate + aliphatic sulfonateSide 2 + [sulfonate-binding protein]Side 1.. Functionally, part of the ABC transporter complex SsuABC involved in aliphatic sulfonates import. Responsible for energy coupling to the transport system. The polypeptide is Aliphatic sulfonates import ATP-binding protein SsuB 2 (Burkholderia lata (strain ATCC 17760 / DSM 23089 / LMG 22485 / NCIMB 9086 / R18194 / 383)).